A 418-amino-acid polypeptide reads, in one-letter code: Serine hydroxymethyltransferase (418 aa).

(6S)-5,6,7,8-tetrahydrofolate contacts are provided by residues Leu118 and 122 to 124 (GHL). Lys227 is subject to N6-(pyridoxal phosphate)lysine. Glu242 contacts (6S)-5,6,7,8-tetrahydrofolate.

Belongs to the SHMT family. Homodimer. Pyridoxal 5'-phosphate is required as a cofactor.

Its subcellular location is the cytoplasm. It carries out the reaction (6R)-5,10-methylene-5,6,7,8-tetrahydrofolate + glycine + H2O = (6S)-5,6,7,8-tetrahydrofolate + L-serine. It participates in one-carbon metabolism; tetrahydrofolate interconversion. It functions in the pathway amino-acid biosynthesis; glycine biosynthesis; glycine from L-serine: step 1/1. Catalyzes the reversible interconversion of serine and glycine with tetrahydrofolate (THF) serving as the one-carbon carrier. This reaction serves as the major source of one-carbon groups required for the biosynthesis of purines, thymidylate, methionine, and other important biomolecules. Also exhibits THF-independent aldolase activity toward beta-hydroxyamino acids, producing glycine and aldehydes, via a retro-aldol mechanism. This is Serine hydroxymethyltransferase from Chloroflexus aggregans (strain MD-66 / DSM 9485).